We begin with the raw amino-acid sequence, 225 residues long: UPF0173 metal-dependent hydrolase Pcal_1074 (225 aa).

This sequence belongs to the UPF0173 family.

In Pyrobaculum calidifontis (strain DSM 21063 / JCM 11548 / VA1), this protein is UPF0173 metal-dependent hydrolase Pcal_1074.